The chain runs to 509 residues: AAA ATPase forming ring-shaped complexes (509 aa).

The stretch at 11–50 (AHLQRTISNLSARNAKLAELLKASRDKLSILQDQLEDLAA) forms a coiled coil. 236-241 (GCGKTL) serves as a coordination point for ATP.

The protein belongs to the AAA ATPase family. Homohexamer. Assembles into a hexameric ring structure.

The protein is AAA ATPase forming ring-shaped complexes of Corynebacterium diphtheriae (strain ATCC 700971 / NCTC 13129 / Biotype gravis).